The chain runs to 230 residues: GDT1-like protein 4 (230 aa).

A run of 6 helical transmembrane segments spans residues 12-32 (LAMTFVSEIGDKTFFAAAILA), 39-59 (LVLAGCLSALIVMTILSATLG), 71-91 (THHITTLLFFGFGLWSLWDGF), 135-155 (AFLTQFFSPIFLKAFSINFFG), 175-195 (FGVVLGGVVAQFLCTTAAVIG), and 207-227 (IVALSGGMLFIIFGIQSYLTS).

Belongs to the GDT1 family.

The protein localises to the membrane. The polypeptide is GDT1-like protein 4 (Arabidopsis thaliana (Mouse-ear cress)).